The primary structure comprises 294 residues: MDQFRNIGIVGRMGSVKVVESLRQLKQYLTANNYHVIIEEDTSTMIPGHGLQVASKKLLGEICDLVIVVGGDGSLLGAARELAKSKIPILGVNRGRLGFLTDISPSDLEERLARVLEGDYIEESRFLLDGHVERNGQPLGYGSALNDVVLHPGKSTRMIGFDLFIDGHFVYSQRSDGLIVATPTGSTAYSLSAGGPIMHPKLDAVVLVPMFPHTLSSRPIVVDGKSEIKLVIGETNETYPQVSFDGQMNIACAPGDIIRITKKPFKIRLIHPTDHNFYATCRDKLGWASEIAAS.

Asp-72 functions as the Proton acceptor in the catalytic mechanism. NAD(+) is bound by residues 72 to 73 (DG), 146 to 147 (ND), Arg-157, Arg-174, Asp-176, 187 to 192 (TAYSLS), and Gln-247.

It belongs to the NAD kinase family. The cofactor is a divalent metal cation.

It is found in the cytoplasm. The catalysed reaction is NAD(+) + ATP = ADP + NADP(+) + H(+). Functionally, involved in the regulation of the intracellular balance of NAD and NADP, and is a key enzyme in the biosynthesis of NADP. Catalyzes specifically the phosphorylation on 2'-hydroxyl of the adenosine moiety of NAD to yield NADP. In Marinobacter nauticus (strain ATCC 700491 / DSM 11845 / VT8) (Marinobacter aquaeolei), this protein is NAD kinase.